The chain runs to 134 residues: Neuropeptide-like peptide 11 (134 aa).

The signal sequence occupies residues 1 to 20; the sequence is MMSTLALVSLAIFGIAVVCA. Residues 21-106 constitute a propeptide that is removed on maturation; the sequence is APKPATVPVA…YNRLIDAGKK (86 aa). At Ala-131 the chain carries Alanine amide.

In Caenorhabditis elegans, this protein is Neuropeptide-like peptide 11 (nlp-11).